Consider the following 98-residue polypeptide: HIG1 domain family member 1B (98 aa).

The Cytoplasmic portion of the chain corresponds to 1–28; that stretch reads MSANKGWWVPPEGEDNLSKKFLRKTRES. Positions 1-94 constitute an HIG1 domain; the sequence is MSANKGWWVP…YRDYIKRVSE (94 aa). A helical membrane pass occupies residues 29–46; the sequence is PLVPIGVAGCLVIAAYRI. Residues 47-60 are Extracellular-facing; that stretch reads YRLKARGSTKLSIH. The helical transmembrane segment at 61–83 threads the bilayer; it reads LIHTRVAAQACAVGAIMLGAMYT. The Cytoplasmic segment spans residues 84–98; the sequence is MYRDYIKRVSEDAEK.

It is found in the membrane. This is HIG1 domain family member 1B (Higd1b) from Mus musculus (Mouse).